Reading from the N-terminus, the 416-residue chain is E3 ubiquitin-protein ligase RNFT1 (416 aa).

Residues 27–45 (QSSSGHTHHQPGSNDSPSV) show a composition bias toward polar residues. Disordered regions lie at residues 27 to 50 (QSSSGHTHHQPGSNDSPSVCMSLP) and 63 to 116 (GDVT…ADSR). A compositionally biased stretch (basic residues) spans 77–86 (GARSSSRRVR). Transmembrane regions (helical) follow at residues 146–166 (LVVQHITGISVGIGLLTTFLY), 184–204 (LQCLWILVFLLFSSLLLYYTF), 214–234 (VFMNPSLGPLHFFDALWVVGI), 237–257 (FIGKFFFMGLKCIILLVPSFV), 265–287 (YWYMALEEVAQCYCMLVSTPVWF), and 302–322 (WHFGILLALLYLILKLLIIFG). The segment at 349–400 (CSEVDGMCAICQAEFIKPIVLVCQHVFCEECISLWFNKEKTCPLCRTVISNQ) is required for ubiquitin ligase activity and for protection against ER stress-induced cell death. The segment at 356 to 394 (CAICQAEFIKPIVLVCQHVFCEECISLWFNKEKTCPLCR) adopts an RING-type zinc-finger fold.

It localises to the endoplasmic reticulum membrane. It carries out the reaction S-ubiquitinyl-[E2 ubiquitin-conjugating enzyme]-L-cysteine + [acceptor protein]-L-lysine = [E2 ubiquitin-conjugating enzyme]-L-cysteine + N(6)-ubiquitinyl-[acceptor protein]-L-lysine.. The protein operates within protein modification; protein ubiquitination. Its function is as follows. E3 ubiquitin-protein ligase that acts in the endoplasmic reticulum (ER)-associated degradation (ERAD) pathway, which targets misfolded proteins that accumulate in the endoplasmic reticulum (ER) for ubiquitination and subsequent proteasome-mediated degradation. Protects cells from ER stress-induced apoptosis. This is E3 ubiquitin-protein ligase RNFT1 (rnft1) from Xenopus tropicalis (Western clawed frog).